Consider the following 116-residue polypeptide: MRWDVIILYAISRPYATRRTGSHTHPRDSRYIAANQRRPPSACRVGPSPAKQRKDIPIFELLDTTLIKNALFALTSFLYYRTNILTCPFLNFLYLSRTGQLDKFCKDQTVTQILAT.

A signal peptide spans 1–19 (MRWDVIILYAISRPYATRR). Residues 18–50 (RRTGSHTHPRDSRYIAANQRRPPSACRVGPSPA) form a disordered region.

This is an uncharacterized protein from Saccharomyces cerevisiae (strain ATCC 204508 / S288c) (Baker's yeast).